The chain runs to 292 residues: Calcium-binding protein CBP (292 aa).

Residues 1–80 (MAGYPPNPGS…YGSGGGYGAP (80 aa)) form a disordered region. The span at 12–21 (YPYGGAGGYG) shows a compositional bias: gly residues. Over residues 22–40 (APPPPYGSSPAPSAPPYGA) the composition is skewed to pro residues. EF-hand domains lie at 121-156 (GTDP…YSQS) and 187-222 (YSLQ…LGYS). Positions 134, 136, 138, 140, 145, 200, 202, 204, 206, and 211 each coordinate Ca(2+).

In terms of biological role, potential calcium sensor. The polypeptide is Calcium-binding protein CBP (Oryza sativa subsp. japonica (Rice)).